Here is a 245-residue protein sequence, read N- to C-terminus: Mannose/glucose-specific lectin (245 aa).

A carbohydrate-binding residues include Asp87 and Gly107. Asn119 carries N-linked (GlcNAc...) asparagine glycosylation. Residues Glu129 and Asp131 each coordinate Mn(2+). Ca(2+)-binding residues include Asp131 and Phe133. A carbohydrate contacts are provided by Ser138 and Asn139. Ca(2+) contacts are provided by Asn139 and Asp142. Mn(2+) contacts are provided by Asp142 and His147. Gly221, Glu222, and Gln223 together coordinate a carbohydrate.

The protein belongs to the leguminous lectin family. As to quaternary structure, homodimer.

Its function is as follows. Mannose/glucose-specific lectin that also binds derivatives N-acetyl-D-glucosamine and alpha-methyl-D-mannopyranoside with even higher affinity. Has hemagglutinating activity towards rabbit erythrocytes. Is toxic towards brine shrimp A.nauplii. In rats, induces dose-dependent paw edema. This Centrolobium tomentosum (Arariba) protein is Mannose/glucose-specific lectin.